The sequence spans 550 residues: MTKFVFVTGGVVSSLGKGIAAASLAAILESRGLKVTLLKLDPYINVDPGTMSPFQHGEVFVTEDGAETDLDLGHYERFVSAKMRKSNNFTTGQIYESVIRKERRGEYLGKTVQVIPHITNEIQAFIERGAAASHDGKADVALVEIGGTVGDIESLPFLEAARQMSLRMGRNRCAFVHLTLVPFIASAGELKTKPTQHSVQKLREIGISPTALLCRADRPIPDDERAKISLFANIPQDAVISVWDADSIYKIPQMLNEQGLDRLICEELRLDPKPADLSMWQKLVNAQENPEHEITIGMVGKYVDLTESYKSLIEALRHAGMHTATRVNIEYIDSEELESGHLEVLAPLDAILVPGGFGKRGTEGKIRAIQYARENKVPYLGICLGMQLAVIEFARHVAGMTDANSTEFNLETEHPVVALITEWVDREGKVEQRSAESDLGGTMRLGAQRVPVKEGTKAASIYGAEVNERHRHRYEVNNHYVPTLENAGMVISARTPTENLPEMMELPGSMHPWFVGVQFHPEFTSTPRDGHPLFKAYVEAALAGQQRKGA.

The segment at 1–270 (MTKFVFVTGG…DRLICEELRL (270 aa)) is amidoligase domain. Serine 13 is a binding site for CTP. Serine 13 serves as a coordination point for UTP. ATP contacts are provided by residues 14 to 19 (SLGKGI) and aspartate 71. Residues aspartate 71 and glutamate 144 each coordinate Mg(2+). CTP is bound by residues 151 to 153 (DIE), 191 to 196 (KTKPTQ), and lysine 227. UTP is bound by residues 191-196 (KTKPTQ) and lysine 227. In terms of domain architecture, Glutamine amidotransferase type-1 spans 295-547 (TIGMVGKYVD…VEAALAGQQR (253 aa)). Residue glycine 356 participates in L-glutamine binding. The Nucleophile; for glutamine hydrolysis role is filled by cysteine 383. Residues 384–387 (LGMQ), glutamate 407, and arginine 473 each bind L-glutamine. Active-site residues include histidine 520 and glutamate 522.

The protein belongs to the CTP synthase family. In terms of assembly, homotetramer.

It catalyses the reaction UTP + L-glutamine + ATP + H2O = CTP + L-glutamate + ADP + phosphate + 2 H(+). The catalysed reaction is L-glutamine + H2O = L-glutamate + NH4(+). The enzyme catalyses UTP + NH4(+) + ATP = CTP + ADP + phosphate + 2 H(+). Its pathway is pyrimidine metabolism; CTP biosynthesis via de novo pathway; CTP from UDP: step 2/2. With respect to regulation, allosterically activated by GTP, when glutamine is the substrate; GTP has no effect on the reaction when ammonia is the substrate. The allosteric effector GTP functions by stabilizing the protein conformation that binds the tetrahedral intermediate(s) formed during glutamine hydrolysis. Inhibited by the product CTP, via allosteric rather than competitive inhibition. Functionally, catalyzes the ATP-dependent amination of UTP to CTP with either L-glutamine or ammonia as the source of nitrogen. Regulates intracellular CTP levels through interactions with the four ribonucleotide triphosphates. This Cupriavidus pinatubonensis (strain JMP 134 / LMG 1197) (Cupriavidus necator (strain JMP 134)) protein is CTP synthase.